An 842-amino-acid chain; its full sequence is Protein P (842 aa).

Residues 1 to 177 form a terminal protein domain (TP) region; sequence MPLSYQHFRR…FCGSPYSWEQ (177 aa). The interval 178-345 is spacer; sequence ELHHGAFLDG…YCLSHLVNLL (168 aa). The tract at residues 186–273 is disordered; the sequence is DGPSRMGEES…AKNIASRSAS (88 aa). Residues 223 to 239 are compositionally biased toward polar residues; it reads GPQSQQRPLDRSQQGRS. Residues 346-689 are polymerase/reverse transcriptase domain (RT); that stretch reads EDWGPCTEHG…YLNLYPVARQ (344 aa). One can recognise a Reverse transcriptase domain in the interval 356–599; sequence RHHIRIPRTP…YSLNFMGYVI (244 aa). 3 residues coordinate Mg(2+): Asp-428, Asp-550, and Asp-551.

Belongs to the hepadnaviridae P protein family.

It carries out the reaction DNA(n) + a 2'-deoxyribonucleoside 5'-triphosphate = DNA(n+1) + diphosphate. The catalysed reaction is Endonucleolytic cleavage to 5'-phosphomonoester.. Activated by host HSP70 and HSP40 in vitro to be able to bind the epsilon loop of the pgRNA. Because deletion of the RNase H region renders the protein partly chaperone-independent, the chaperones may be needed indirectly to relieve occlusion of the RNA-binding site by this domain. Inhibited by several reverse-transcriptase inhibitors: Lamivudine, Adefovir and Entecavir. Multifunctional enzyme that converts the viral RNA genome into dsDNA in viral cytoplasmic capsids. This enzyme displays a DNA polymerase activity that can copy either DNA or RNA templates, and a ribonuclease H (RNase H) activity that cleaves the RNA strand of RNA-DNA heteroduplexes in a partially processive 3'- to 5'-endonucleasic mode. Neo-synthesized pregenomic RNA (pgRNA) are encapsidated together with the P protein, and reverse-transcribed inside the nucleocapsid. Initiation of reverse-transcription occurs first by binding the epsilon loop on the pgRNA genome, and is initiated by protein priming, thereby the 5'-end of (-)DNA is covalently linked to P protein. Partial (+)DNA is synthesized from the (-)DNA template and generates the relaxed circular DNA (RC-DNA) genome. After budding and infection, the RC-DNA migrates in the nucleus, and is converted into a plasmid-like covalently closed circular DNA (cccDNA). The activity of P protein does not seem to be necessary for cccDNA generation, and is presumably released from (+)DNA by host nuclear DNA repair machinery. In Homo sapiens (Human), this protein is Protein P.